A 185-amino-acid chain; its full sequence is Large ribosomal subunit protein uL5 (185 aa).

Belongs to the universal ribosomal protein uL5 family. In terms of assembly, part of the 50S ribosomal subunit; part of the 5S rRNA/L5/L18/L25 subcomplex. Contacts the 5S rRNA and the P site tRNA. Forms a bridge to the 30S subunit in the 70S ribosome.

Its function is as follows. This is one of the proteins that bind and probably mediate the attachment of the 5S RNA into the large ribosomal subunit, where it forms part of the central protuberance. In the 70S ribosome it contacts protein S13 of the 30S subunit (bridge B1b), connecting the 2 subunits; this bridge is implicated in subunit movement. Contacts the P site tRNA; the 5S rRNA and some of its associated proteins might help stabilize positioning of ribosome-bound tRNAs. In Xanthobacter autotrophicus (strain ATCC BAA-1158 / Py2), this protein is Large ribosomal subunit protein uL5.